We begin with the raw amino-acid sequence, 300 residues long: Porphobilinogen deaminase (300 aa).

The residue at position 239 (C239) is an S-(dipyrrolylmethanemethyl)cysteine.

The protein belongs to the HMBS family. As to quaternary structure, monomer. It depends on dipyrromethane as a cofactor.

The catalysed reaction is 4 porphobilinogen + H2O = hydroxymethylbilane + 4 NH4(+). It participates in porphyrin-containing compound metabolism; protoporphyrin-IX biosynthesis; coproporphyrinogen-III from 5-aminolevulinate: step 2/4. In terms of biological role, tetrapolymerization of the monopyrrole PBG into the hydroxymethylbilane pre-uroporphyrinogen in several discrete steps. This chain is Porphobilinogen deaminase, found in Francisella philomiragia subsp. philomiragia (strain ATCC 25017 / CCUG 19701 / FSC 153 / O#319-036).